A 1098-amino-acid chain; its full sequence is Eukaryotic translation initiation factor 3 subunit A (1098 aa).

The PCI domain maps to 324 to 503 (AQEQATRVLL…DCVRFGSSDA (180 aa)). Residues 574–844 (TEIERIHRRK…ARQAVIDSQR (271 aa)) are a coiled coil. 2 disordered regions span residues 599–648 (EKAA…KIKR) and 805–1098 (RAEK…NWRR). 3 stretches are compositionally biased toward basic and acidic residues: residues 608 to 648 (QAKR…KIKR), 805 to 857 (RAEK…REME), and 877 to 895 (MPQR…EPFR). Residues 905-914 (DSSWRSSAQP) are compositionally biased toward polar residues. Basic and acidic residues-rich tracts occupy residues 916-978 (RKPD…ERGA) and 1054-1079 (LPPR…RDGP). Residues 1080–1098 (NRNSGANNAGNADSANWRR) are compositionally biased toward low complexity.

Belongs to the eIF-3 subunit A family. Component of the eukaryotic translation initiation factor 3 (eIF-3) complex.

Its subcellular location is the cytoplasm. Functionally, RNA-binding component of the eukaryotic translation initiation factor 3 (eIF-3) complex, which is involved in protein synthesis of a specialized repertoire of mRNAs and, together with other initiation factors, stimulates binding of mRNA and methionyl-tRNAi to the 40S ribosome. The eIF-3 complex specifically targets and initiates translation of a subset of mRNAs involved in cell proliferation. This is Eukaryotic translation initiation factor 3 subunit A from Caenorhabditis briggsae.